A 361-amino-acid chain; its full sequence is Phosphoserine aminotransferase (361 aa).

Residue Arg43 participates in L-glutamate binding. Pyridoxal 5'-phosphate-binding positions include 77 to 78 (AS), Trp103, Thr153, Asp173, and Gln196. Lys197 bears the N6-(pyridoxal phosphate)lysine mark. 238 to 239 (NT) is a pyridoxal 5'-phosphate binding site.

The protein belongs to the class-V pyridoxal-phosphate-dependent aminotransferase family. SerC subfamily. Homodimer. Pyridoxal 5'-phosphate is required as a cofactor.

The protein resides in the cytoplasm. It carries out the reaction O-phospho-L-serine + 2-oxoglutarate = 3-phosphooxypyruvate + L-glutamate. The enzyme catalyses 4-(phosphooxy)-L-threonine + 2-oxoglutarate = (R)-3-hydroxy-2-oxo-4-phosphooxybutanoate + L-glutamate. Its pathway is amino-acid biosynthesis; L-serine biosynthesis; L-serine from 3-phospho-D-glycerate: step 2/3. It participates in cofactor biosynthesis; pyridoxine 5'-phosphate biosynthesis; pyridoxine 5'-phosphate from D-erythrose 4-phosphate: step 3/5. Functionally, catalyzes the reversible conversion of 3-phosphohydroxypyruvate to phosphoserine and of 3-hydroxy-2-oxo-4-phosphonooxybutanoate to phosphohydroxythreonine. This is Phosphoserine aminotransferase from Pseudomonas putida (strain ATCC 47054 / DSM 6125 / CFBP 8728 / NCIMB 11950 / KT2440).